The primary structure comprises 132 residues: MTAIDKIQVLDSIEKELLLCLQSAGQALLELSKEKTSQKATETHTNQFLKSLNIVESKLSEQINYLTQVSTGQPHEGSGYAAAKVLQMAWHRIQHVKSRIKELEECKIKYVQATNRLQTQRTGPNPGSGGVM.

The protein belongs to the Mediator complex subunit 11 family. As to quaternary structure, component of the Mediator complex.

The protein localises to the nucleus. Component of the Mediator complex, a coactivator involved in the regulated transcription of nearly all RNA polymerase II-dependent genes. Mediator functions as a bridge to convey information from gene-specific regulatory proteins to the basal RNA polymerase II transcription machinery. Mediator is recruited to promoters by direct interactions with regulatory proteins and serves as a scaffold for theQ9P086 assembly of a functional pre-initiation complex with RNA polymerase II and the general transcription factors. The chain is Mediator of RNA polymerase II transcription subunit 11 (MED11) from Aedes aegypti (Yellowfever mosquito).